A 171-amino-acid chain; its full sequence is Sec-independent protein translocase protein TatB (171 aa).

The chain crosses the membrane as a helical span at residues 1-21 (MFDIGFSELLLVFIIGLVVLG). The interval 117 to 171 (KDNEAAHEGVTPAAAQTQASSPEQKPETTPEPVVKPAADAEPKTAAPSPSSSDKP) is disordered. Residues 130 to 139 (AAQTQASSPE) are compositionally biased toward polar residues.

It belongs to the TatB family. The Tat system comprises two distinct complexes: a TatABC complex, containing multiple copies of TatA, TatB and TatC subunits, and a separate TatA complex, containing only TatA subunits. Substrates initially bind to the TatABC complex, which probably triggers association of the separate TatA complex to form the active translocon.

It localises to the cell inner membrane. Part of the twin-arginine translocation (Tat) system that transports large folded proteins containing a characteristic twin-arginine motif in their signal peptide across membranes. Together with TatC, TatB is part of a receptor directly interacting with Tat signal peptides. TatB may form an oligomeric binding site that transiently accommodates folded Tat precursor proteins before their translocation. This is Sec-independent protein translocase protein TatB from Escherichia coli O157:H7.